Consider the following 270-residue polypeptide: Tetracenomycin polyketide synthesis O-methyltransferase TcmP (270 aa).

Its pathway is antibiotic biosynthesis; tetracenomycin C biosynthesis. O-methyltransferase that catalyzes the methylation of the C-9 carboxy group of tetracenomycin E (TCM E) to yield TCM A2. Catalyzes as well the following side reactions: methylation of 8-O-methyl-TCM D3 to 9-carboxymethyl-8-O-methyl-TCM D3; and of TCM B3 to 9-carboxymethyl-TCM B3. The sequence is that of Tetracenomycin polyketide synthesis O-methyltransferase TcmP (tcmP) from Streptomyces glaucescens.